The primary structure comprises 445 residues: GTPase Der (445 aa).

2 consecutive EngA-type G domains span residues 3–167 and 180–353; these read PVIA…YAGQ and IKIA…AAAM. Residues 9–16, 56–60, 119–122, 186–193, 233–237, and 298–301 contribute to the GTP site; these read GRPNVGKS, DTGGF, NKAE, DTAGL, and NKWD. The KH-like domain occupies 354–438; sequence AKLPTPKLTR…PLRIEFRSSN (85 aa).

This sequence belongs to the TRAFAC class TrmE-Era-EngA-EngB-Septin-like GTPase superfamily. EngA (Der) GTPase family. Associates with the 50S ribosomal subunit.

In terms of biological role, GTPase that plays an essential role in the late steps of ribosome biogenesis. The protein is GTPase Der of Burkholderia ambifaria (strain ATCC BAA-244 / DSM 16087 / CCUG 44356 / LMG 19182 / AMMD) (Burkholderia cepacia (strain AMMD)).